Reading from the N-terminus, the 199-residue chain is Chaperone protein TorD (199 aa).

This sequence belongs to the TorD/DmsD family. TorD subfamily.

Its subcellular location is the cytoplasm. In terms of biological role, involved in the biogenesis of TorA. Acts on TorA before the insertion of the molybdenum cofactor and, as a result, probably favors a conformation of the apoenzyme that is competent for acquiring the cofactor. In Escherichia coli O139:H28 (strain E24377A / ETEC), this protein is Chaperone protein TorD.